A 194-amino-acid chain; its full sequence is Inosine triphosphate pyrophosphatase (194 aa).

10–15 (TGNANK) serves as a coordination point for ITP. Glutamate 41 lines the Mg(2+) pocket. Residues lysine 54, 72–73 (DT), lysine 89, 147–150 (FGWD), lysine 172, and 177–178 (QR) contribute to the ITP site.

This sequence belongs to the HAM1 NTPase family. In terms of assembly, homodimer. Mg(2+) serves as cofactor. Mn(2+) is required as a cofactor.

Its subcellular location is the cytoplasm. It is found in the nucleus. It catalyses the reaction ITP + H2O = IMP + diphosphate + H(+). The catalysed reaction is dITP + H2O = dIMP + diphosphate + H(+). It carries out the reaction XTP + H2O = XMP + diphosphate + H(+). Its function is as follows. Pyrophosphatase that hydrolyzes non-canonical purine nucleotides such as inosine triphosphate (ITP), deoxyinosine triphosphate (dITP) or xanthosine 5'-triphosphate (XTP) to their respective monophosphate derivatives. The enzyme does not distinguish between the deoxy- and ribose forms. Probably excludes non-canonical purines from RNA and DNA precursor pools, thus preventing their incorporation into RNA and DNA and avoiding chromosomal lesions. This Kluyveromyces lactis (strain ATCC 8585 / CBS 2359 / DSM 70799 / NBRC 1267 / NRRL Y-1140 / WM37) (Yeast) protein is Inosine triphosphate pyrophosphatase.